A 223-amino-acid chain; its full sequence is Superoxide dismutase [Mn], mitochondrial (223 aa).

A mitochondrion-targeting transit peptide spans 1–24 (MNLIIGVAGRLLVGKNYCLNTQRL). Mn(2+) is bound by residues H50, H98, D184, and H188.

This sequence belongs to the iron/manganese superoxide dismutase family. In terms of assembly, homotetramer. The cofactor is Mn(2+).

Its subcellular location is the mitochondrion matrix. The catalysed reaction is 2 superoxide + 2 H(+) = H2O2 + O2. Its function is as follows. Destroys superoxide anion radicals which are normally produced within the cells and which are toxic to biological systems. In Onchocerca volvulus, this protein is Superoxide dismutase [Mn], mitochondrial (sod-2).